Reading from the N-terminus, the 466-residue chain is Cysteine--tRNA ligase (466 aa).

Cys28 provides a ligand contact to Zn(2+). The 'HIGH' region signature appears at 30-40; the sequence is PTVYNYIHIGN. Zn(2+) is bound by residues Cys208, His233, and Glu237. A 'KMSKS' region motif is present at residues 265–269; the sequence is KMSKS. Lys268 is an ATP binding site.

The protein belongs to the class-I aminoacyl-tRNA synthetase family. Monomer. Zn(2+) is required as a cofactor.

Its subcellular location is the cytoplasm. It catalyses the reaction tRNA(Cys) + L-cysteine + ATP = L-cysteinyl-tRNA(Cys) + AMP + diphosphate. This chain is Cysteine--tRNA ligase, found in Staphylococcus aureus (strain MRSA252).